A 361-amino-acid chain; its full sequence is Palmitoyltransferase ZDHHC16 (361 aa).

The Cytoplasmic segment spans residues 1–77 (MRGQRSLLLG…VYWLVDNVIR (77 aa)). Residues 78–98 (WFGVVFVVLVIVLTGSIVAIA) form a helical membrane-spanning segment. The Lumenal portion of the chain corresponds to 99–116 (YLCVLPLILRTYSVPRLC). Residues 117 to 137 (WHFFYSHWNLILIVFHYYQAI) traverse the membrane as a helical segment. Over 138–198 (TTPPGYPPQG…NNCVGHYNHR (61 aa)) the chain is Cytoplasmic. In terms of domain architecture, DHHC spans 155–205 (SICKKCIYPKPARTHHCSICNRCVLKMDHHCPWLNNCVGHYNHRYFFSFCF). Residue C185 is the S-palmitoyl cysteine intermediate of the active site. The chain crosses the membrane as a helical span at residues 199-219 (YFFSFCFFMTLGCVYCSYGSW). The Lumenal segment spans residues 220–250 (DLFREAYAAIETYHQTPPPTFSFRERITHKS). Residues 251 to 271 (LVYLWFLCSSVALALGALTMW) traverse the membrane as a helical segment. Residues 272-361 (HAVLISRGET…TAHSASVMAV (90 aa)) lie on the Cytoplasmic side of the membrane.

It belongs to the DHHC palmitoyltransferase family. Interacts with ABL1. Interacts with COPS5. As to expression, ubiquitously expressed.

The protein resides in the endoplasmic reticulum membrane. The enzyme catalyses L-cysteinyl-[protein] + hexadecanoyl-CoA = S-hexadecanoyl-L-cysteinyl-[protein] + CoA. Functionally, palmitoyl acyltransferase that mediates palmitoylation of proteins such as PLN and ZDHHC6. Required during embryonic heart development and cardiac function, possibly by mediating palmitoylation of PLN, thereby affecting PLN phosphorylation and homooligomerization. Also required for eye development. Palmitoylates ZDHHC6, affecting the quaternary assembly of ZDHHC6, its localization, stability and function. May play a role in DNA damage response. May be involved in apoptosis regulation. Involved in the proliferation of neural stem cells by regulating the FGF/ERK pathway. The chain is Palmitoyltransferase ZDHHC16 from Mus musculus (Mouse).